The following is a 59-amino-acid chain: Small, acid-soluble spore protein H (59 aa).

This sequence belongs to the SspH family.

Its subcellular location is the spore core. The sequence is that of Small, acid-soluble spore protein H from Bacillus thuringiensis subsp. konkukian (strain 97-27).